The chain runs to 555 residues: Glutamate--tRNA ligase (555 aa).

The short motif at Pro-103 to His-113 is the 'HIGH' region element.

It belongs to the class-I aminoacyl-tRNA synthetase family. Glutamate--tRNA ligase type 2 subfamily.

It is found in the cytoplasm. It catalyses the reaction tRNA(Glu) + L-glutamate + ATP = L-glutamyl-tRNA(Glu) + AMP + diphosphate. Catalyzes the attachment of glutamate to tRNA(Glu) in a two-step reaction: glutamate is first activated by ATP to form Glu-AMP and then transferred to the acceptor end of tRNA(Glu). The polypeptide is Glutamate--tRNA ligase (Methanobrevibacter smithii (strain ATCC 35061 / DSM 861 / OCM 144 / PS)).